Reading from the N-terminus, the 226-residue chain is Sugar fermentation stimulation protein homolog (226 aa).

It belongs to the SfsA family.

The sequence is that of Sugar fermentation stimulation protein homolog from Clostridium beijerinckii (strain ATCC 51743 / NCIMB 8052) (Clostridium acetobutylicum).